The chain runs to 173 residues: Probable chemoreceptor glutamine deamidase CheD 2 (173 aa).

The protein belongs to the CheD family.

It catalyses the reaction L-glutaminyl-[protein] + H2O = L-glutamyl-[protein] + NH4(+). In terms of biological role, probably deamidates glutamine residues to glutamate on methyl-accepting chemotaxis receptors (MCPs), playing an important role in chemotaxis. The sequence is that of Probable chemoreceptor glutamine deamidase CheD 2 from Albidiferax ferrireducens (strain ATCC BAA-621 / DSM 15236 / T118) (Rhodoferax ferrireducens).